The following is a 493-amino-acid chain: UDP-N-acetylmuramoyl-L-alanyl-D-glutamate--L-lysine ligase (493 aa).

Serine 30 is a binding site for UDP-N-acetyl-alpha-D-muramoyl-L-alanyl-D-glutamate. 110–116 (GTNGKTS) serves as a coordination point for ATP. UDP-N-acetyl-alpha-D-muramoyl-L-alanyl-D-glutamate is bound by residues asparagine 151, 152–153 (TT), serine 179, and arginine 187. Residue lysine 219 is modified to N6-carboxylysine. Residues 406–409 (DNPA) carry the L-lysine recognition motif motif.

The protein belongs to the MurCDEF family. MurE subfamily. The cofactor is Mg(2+). Post-translationally, carboxylation is probably crucial for Mg(2+) binding and, consequently, for the gamma-phosphate positioning of ATP.

It localises to the cytoplasm. It carries out the reaction UDP-N-acetyl-alpha-D-muramoyl-L-alanyl-D-glutamate + L-lysine + ATP = UDP-N-acetyl-alpha-D-muramoyl-L-alanyl-gamma-D-glutamyl-L-lysine + ADP + phosphate + H(+). Its pathway is cell wall biogenesis; peptidoglycan biosynthesis. Catalyzes the addition of L-lysine to the nucleotide precursor UDP-N-acetylmuramoyl-L-alanyl-D-glutamate (UMAG) in the biosynthesis of bacterial cell-wall peptidoglycan. Cannot use diaminopimelate as substrate. Can accept L-ornithine as substrate, but the efficiency is 400-fold lower than that with L-lysine. Seems to have a role in beta-lactam antibiotic resistance. The protein is UDP-N-acetylmuramoyl-L-alanyl-D-glutamate--L-lysine ligase of Staphylococcus aureus (strain NCTC 8325 / PS 47).